A 420-amino-acid polypeptide reads, in one-letter code: D-inositol 3-phosphate glycosyltransferase (420 aa).

Histidine 13 lines the 1D-myo-inositol 3-phosphate pocket. UDP-N-acetyl-alpha-D-glucosamine is bound by residues 19 to 20 and glycine 27; that span reads QP. 1D-myo-inositol 3-phosphate contacts are provided by residues 24–29, lysine 82, tyrosine 115, threonine 139, and arginine 159; that span reads DAGGMN. UDP-N-acetyl-alpha-D-glucosamine is bound by residues arginine 233, lysine 238, and valine 294. Mg(2+) contacts are provided by phenylalanine 303, arginine 304, and alanine 306. Glutamate 316 and glutamate 324 together coordinate UDP-N-acetyl-alpha-D-glucosamine. Threonine 330 is a binding site for Mg(2+).

The protein belongs to the glycosyltransferase group 1 family. MshA subfamily. As to quaternary structure, homodimer.

The enzyme catalyses 1D-myo-inositol 3-phosphate + UDP-N-acetyl-alpha-D-glucosamine = 1D-myo-inositol 2-acetamido-2-deoxy-alpha-D-glucopyranoside 3-phosphate + UDP + H(+). Catalyzes the transfer of a N-acetyl-glucosamine moiety to 1D-myo-inositol 3-phosphate to produce 1D-myo-inositol 2-acetamido-2-deoxy-glucopyranoside 3-phosphate in the mycothiol biosynthesis pathway. This Pseudarthrobacter chlorophenolicus (strain ATCC 700700 / DSM 12829 / CIP 107037 / JCM 12360 / KCTC 9906 / NCIMB 13794 / A6) (Arthrobacter chlorophenolicus) protein is D-inositol 3-phosphate glycosyltransferase.